Consider the following 188-residue polypeptide: Viral FLICE protein (188 aa).

DED domains follow at residues 2-74 (ATYE…DLLH) and 93-169 (PYQL…QVQT).

Interacts with host RIPK1, TRAF2, MAP3K14, IKBKB, and IKBKG. Interacts with host CADM1; this interaction is essential for chronic NF-kappa-B activation.

Its function is as follows. Plays a role in the modulation of host signaling pathways by acting as an activator of both the classic and the alternative NF-kappa-B pathways. Thereby, initiates an important range of cellular processes to promote cell survival, proliferation and protection from apoptosis. The protein is Viral FLICE protein (ORF71) of Human herpesvirus 8 type P (isolate GK18) (HHV-8).